Here is a 28-residue protein sequence, read N- to C-terminus: Conotoxin Vi14b (28 aa).

Cystine bridges form between Cys-4/Cys-21 and Cys-7/Cys-18. An N6-acetyllysine mark is found at Lys-15 and Lys-25.

Post-translationally, the two N6-acetyllysines at position 15 and 25 have been deduced from the mass difference of 42. They are not common in venom proteins. In terms of tissue distribution, expressed by the venom gland.

Its subcellular location is the secreted. Functionally, in vitro, inhibits proliferation of the mice ovarian cancer cells ID8. The chain is Conotoxin Vi14b from Conus virgo (Virgin cone).